Here is a 114-residue protein sequence, read N- to C-terminus: Evasin P1096 (114 aa).

An N-terminal signal peptide occupies residues 1 to 23; sequence MELNAFTILHIAVFIAVGYYANT. 3 disulfide bridges follow: Cys47–Cys65, Cys51–Cys67, and Cys61–Cys78. Asn50 carries an N-linked (GlcNAc...) asparagine glycan. Positions 89–114 are disordered; sequence DPSQDPSIDEAAPRESVSKRRSNGES. Basic and acidic residues predominate over residues 99–114; the sequence is AAPRESVSKRRSNGES.

It is found in the secreted. Functionally, salivary chemokine-binding protein which binds to host chemokine CXCL8. This Ixodes ricinus (Common tick) protein is Evasin P1096.